Consider the following 636-residue polypeptide: Outer spore wall assembly protein SHE10 (636 aa).

The signal sequence occupies residues 1–23 (MRLVSKLLKALLVLLLAFGSVRY). Coiled-coil stretches lie at residues 433–460 (RAHL…LFEE) and 551–584 (KANL…TEFE). The disordered stretch occupies residues 565-607 (QQREKEKAESASMKASTEFELSSSSFSSSSPSTASSCTASSTS). Low complexity predominate over residues 579–607 (ASTEFELSSSSFSSSSPSTASSCTASSTS).

It belongs to the SHE10 family. In terms of assembly, component of the mitochondria-localized RNase mitochondrial RNA-processing (RNase MRP) composed of one single RNA encoded by the NME1 gene and at least 31 proteins. Absent in the nucleus-localized RNase MRP (NuMRP).

The protein localises to the mitochondrion. Functionally, involved in spore wall assembly. May be a component of the mitochondrial RNase MRP (MtMRP), a ribonucleoprotein endoribonuclease involved in the cleaving RNA transcripts to generate primers for DNA replication in mitochondria. The protein is Outer spore wall assembly protein SHE10 of Kluyveromyces lactis (strain ATCC 8585 / CBS 2359 / DSM 70799 / NBRC 1267 / NRRL Y-1140 / WM37) (Yeast).